The following is a 376-amino-acid chain: Alanine racemase (376 aa).

The active-site Proton acceptor; specific for D-alanine is K36. K36 carries the N6-(pyridoxal phosphate)lysine modification. Position 134 (R134) interacts with substrate. Residue Y266 is the Proton acceptor; specific for L-alanine of the active site. M314 is a binding site for substrate.

Belongs to the alanine racemase family. Requires pyridoxal 5'-phosphate as cofactor.

It catalyses the reaction L-alanine = D-alanine. It participates in amino-acid biosynthesis; D-alanine biosynthesis; D-alanine from L-alanine: step 1/1. In terms of biological role, catalyzes the interconversion of L-alanine and D-alanine. May also act on other amino acids. This chain is Alanine racemase (alr), found in Nitratidesulfovibrio vulgaris (strain DP4) (Desulfovibrio vulgaris).